Consider the following 239-residue polypeptide: Ribosomal RNA small subunit methyltransferase G (239 aa).

S-adenosyl-L-methionine contacts are provided by residues glycine 78, phenylalanine 83, 129–130, and arginine 148; that span reads AE.

The protein belongs to the methyltransferase superfamily. RNA methyltransferase RsmG family.

It is found in the cytoplasm. Its function is as follows. Specifically methylates the N7 position of a guanine in 16S rRNA. The polypeptide is Ribosomal RNA small subunit methyltransferase G (Clostridium botulinum (strain Eklund 17B / Type B)).